The sequence spans 326 residues: Mitochondrial substrate carrier family protein R (326 aa).

Solcar repeat units lie at residues 9–95, 101–214, and 226–318; these read TSPM…LKNN, KSSV…FKRI, and VIGI…LCDY. A run of 6 helical transmembrane segments spans residues 12–32, 64–84, 104–124, 185–205, 226–246, and 290–310; these read MVTL…IAPL, LAGL…YSAI, VQIF…TYPL, GIWR…GVGY, VIGI…QTAA, and LFKG…VAFL.

This sequence belongs to the mitochondrial carrier (TC 2.A.29) family.

The protein localises to the mitochondrion inner membrane. In terms of biological role, mitochondrial solute carriers shuttle metabolites, nucleotides, and cofactors through the mitochondrial inner membrane. May be involved in the accumulation of coenzyme A in the mitochondrial matrix. This chain is Mitochondrial substrate carrier family protein R (mcfR), found in Dictyostelium discoideum (Social amoeba).